Here is a 142-residue protein sequence, read N- to C-terminus: 5-hydroxymethyl-dUMP N-hydrolase (142 aa).

5-hydroxymethyl-dUMP is bound by residues Gly-7, Ile-9, Arg-10, Gly-11, Ser-78, Gly-80, Glu-84, and Ser-108.

Belongs to the 2'-deoxynucleoside 5'-phosphate N-hydrolase 1 family. In terms of assembly, monomer and homodimer.

It is found in the cytoplasm. It localises to the nucleus. The enzyme catalyses 5-hydroxymethyl-dUMP + H2O = 5-hydroxymethyluracil + 2-deoxy-D-ribose 5-phosphate. Functionally, part of a nucleotide salvage pathway that eliminates epigenetically modified 5-hydroxymethyl-dCMP (hmdCMP) in a two-step process entailing deamination to cytotoxic 5-hydroxymethyl-dUMP (hmdUMP), followed by its hydrolysis into 5-hydroxymethyluracil (hmU) and 2-deoxy-D-ribose 5-phosphate (deoxyribosephosphate). Catalyzes the second step in that pathway, the hydrolysis of the N-glycosidic bond in hmdUMP, degrading this cytotoxic nucleotide to avoid its genomic integration. The sequence is that of 5-hydroxymethyl-dUMP N-hydrolase (dnph1) from Tetraodon nigroviridis (Spotted green pufferfish).